Here is a 1225-residue protein sequence, read N- to C-terminus: DNA-directed RNA polymerase subunit beta' (1225 aa).

Zn(2+)-binding residues include Cys-60, Cys-62, Cys-75, and Cys-78. Residues Asp-450, Asp-452, and Asp-454 each coordinate Mg(2+). Residues Cys-818, Cys-892, Cys-899, and Cys-902 each contribute to the Zn(2+) site.

It belongs to the RNA polymerase beta' chain family. As to quaternary structure, the RNAP catalytic core consists of 2 alpha, 1 beta, 1 beta' and 1 omega subunit. When a sigma factor is associated with the core the holoenzyme is formed, which can initiate transcription. Mg(2+) is required as a cofactor. Requires Zn(2+) as cofactor.

It carries out the reaction RNA(n) + a ribonucleoside 5'-triphosphate = RNA(n+1) + diphosphate. Functionally, DNA-dependent RNA polymerase catalyzes the transcription of DNA into RNA using the four ribonucleoside triphosphates as substrates. In Streptococcus pneumoniae serotype 19F (strain G54), this protein is DNA-directed RNA polymerase subunit beta'.